A 476-amino-acid chain; its full sequence is Glycogen synthase (476 aa).

Residue Lys-15 coordinates ADP-alpha-D-glucose.

It belongs to the glycosyltransferase 1 family. Bacterial/plant glycogen synthase subfamily.

It carries out the reaction [(1-&gt;4)-alpha-D-glucosyl](n) + ADP-alpha-D-glucose = [(1-&gt;4)-alpha-D-glucosyl](n+1) + ADP + H(+). The protein operates within glycan biosynthesis; glycogen biosynthesis. Functionally, synthesizes alpha-1,4-glucan chains using ADP-glucose. The chain is Glycogen synthase from Haemophilus influenzae (strain PittGG).